An 89-amino-acid polypeptide reads, in one-letter code: uncharacterized protein (89 aa).

This is an uncharacterized protein from Geobacillus stearothermophilus (Bacillus stearothermophilus).